A 76-amino-acid polypeptide reads, in one-letter code: Spore germination protein-like protein YdzR (76 aa).

It belongs to the GerPA/GerPF family.

This Bacillus subtilis (strain 168) protein is Spore germination protein-like protein YdzR (ydzR).